The primary structure comprises 95 residues: Cliotide T5 (95 aa).

Residues 1-30 (GIPCGESCVFIPCISTVIGCSCKNKVCYRN) constitute a cross-link (cyclopeptide (Gly-Asn)). Intrachain disulfides connect cysteine 4–cysteine 20, cysteine 8–cysteine 22, and cysteine 13–cysteine 27. The propeptide at 31 to 95 (HVIAAEAKTM…KDHLKMSITN (65 aa)) is removed in mature form.

In terms of processing, contains 3 disulfide bonds. This is a cyclic peptide. As to expression, expressed in stem, shoot, root, leaf, pod and nodule but not in flower and seed (at protein level).

Probably participates in a plant defense mechanism. The protein is Cliotide T5 of Clitoria ternatea (Butterfly pea).